The chain runs to 257 residues: Paired box protein 1 homolog (257 aa).

Over residues threonine 26–serine 37 the composition is skewed to low complexity. The segment at threonine 26–serine 58 is disordered. Polar residues predominate over residues aspartate 38–glycine 52. The paired DNA-binding region spans lysine 61–lysine 187. A PAI subdomain region spans residues glutamate 64–asparagine 120. The tract at residues lysine 139 to lysine 187 is RED subdomain.

The protein resides in the nucleus. Functionally, transcription factor. May play a role in pharyngeal cell differentiation. May have a protective role in response to infection by the Gram-negative bacterium Vibrio cholerae. In Caenorhabditis elegans, this protein is Paired box protein 1 homolog.